The sequence spans 448 residues: Probable metal transport system membrane protein CPn_0347/CP_0413/CPj0347/CpB0354 (448 aa).

Transmembrane regions (helical) follow at residues 15 to 35, 47 to 67, 69 to 89, 100 to 120, 144 to 164, 193 to 213, 233 to 253, and 270 to 290; these read FLAV…LLIS, ASYP…SLQA, IFWI…IIVF, SALC…ASYV, FLEA…LWWW, LIFI…VLIS, ILIL…YISV, and LPTG…CLLF.

This sequence belongs to the ABC-3 integral membrane protein family.

Its subcellular location is the cell inner membrane. Part of an ATP-driven transport system CPn_0346/CPn_0347/CPn_0348/CPn_0349 for a metal. This is Probable metal transport system membrane protein CPn_0347/CP_0413/CPj0347/CpB0354 from Chlamydia pneumoniae (Chlamydophila pneumoniae).